Here is an 811-residue protein sequence, read N- to C-terminus: Elongation factor G, mitochondrial (811 aa).

The transit peptide at 1–64 directs the protein to the mitochondrion; it reads MSAIARAAAR…FQQSFQRRWA (64 aa). The tr-type G domain maps to 96-394; that stretch reads RRQRNVGISA…GVCAYLPNPS (299 aa). GTP-binding positions include 105-112, 192-196, and 246-249; these read AHIDSGKT, DTPGH, and NKMD.

Belongs to the TRAFAC class translation factor GTPase superfamily. Classic translation factor GTPase family. EF-G/EF-2 subfamily.

It localises to the mitochondrion. It functions in the pathway protein biosynthesis; polypeptide chain elongation. Mitochondrial GTPase that catalyzes the GTP-dependent ribosomal translocation step during translation elongation. During this step, the ribosome changes from the pre-translocational (PRE) to the post-translocational (POST) state as the newly formed A-site-bound peptidyl-tRNA and P-site-bound deacylated tRNA move to the P and E sites, respectively. Catalyzes the coordinated movement of the two tRNA molecules, the mRNA and conformational changes in the ribosome. The polypeptide is Elongation factor G, mitochondrial (Cryptococcus neoformans var. neoformans serotype D (strain JEC21 / ATCC MYA-565) (Filobasidiella neoformans)).